The chain runs to 338 residues: tRNA N6-adenosine threonylcarbamoyltransferase (338 aa).

The Fe cation site is built by histidine 114 and histidine 118. Residues 137-141 (IVSGG), aspartate 170, glycine 183, aspartate 187, and asparagine 277 contribute to the substrate site. Aspartate 305 contributes to the Fe cation binding site.

Belongs to the KAE1 / TsaD family. Requires Fe(2+) as cofactor.

It localises to the cytoplasm. It carries out the reaction L-threonylcarbamoyladenylate + adenosine(37) in tRNA = N(6)-L-threonylcarbamoyladenosine(37) in tRNA + AMP + H(+). Functionally, required for the formation of a threonylcarbamoyl group on adenosine at position 37 (t(6)A37) in tRNAs that read codons beginning with adenine. Is involved in the transfer of the threonylcarbamoyl moiety of threonylcarbamoyl-AMP (TC-AMP) to the N6 group of A37, together with TsaE and TsaB. TsaD likely plays a direct catalytic role in this reaction. The protein is tRNA N6-adenosine threonylcarbamoyltransferase of Clostridioides difficile (strain 630) (Peptoclostridium difficile).